The primary structure comprises 120 residues: Glycine cleavage system H protein (120 aa).

The 83-residue stretch at 17–99 (IATVGITAHA…RGAGWFFKLK (83 aa)) folds into the Lipoyl-binding domain. Position 58 is an N6-lipoyllysine (K58).

This sequence belongs to the GcvH family. As to quaternary structure, the glycine cleavage system is composed of four proteins: P, T, L and H. (R)-lipoate serves as cofactor.

Functionally, the glycine cleavage system catalyzes the degradation of glycine. The H protein shuttles the methylamine group of glycine from the P protein to the T protein. The chain is Glycine cleavage system H protein from Allorhizobium ampelinum (strain ATCC BAA-846 / DSM 112012 / S4) (Agrobacterium vitis (strain S4)).